The sequence spans 1012 residues: MTNLQDQTQQIVPFIRSLLMPTTGPASIPDDTLEKHTLRSETSTYNLTVGDTGSGLIVFFPGFPGSIVGAHYTLQSNGNYKFDQMLLTAQNLPASYNYCRLVSRSLTVRSSTLPGGVYALNGTINAVTFQGSLSELTDVSYNGLMSATANINDKIGNVLVGEGVTVLSLPTSYDLGYVRLGDPIPAIGLDPKMVATCDSSDRPRVYTITAADNYQFSSQYQTGGVTITLFSANIDAITSLSVGGELVFKTSVQSLVLGATICLIGFDGTAVITRAVAANNGLTAGIDNLMPFNLVIPTNEITQPITSIKLEIVTSKSDGQAGEQMSWSASGSLAVTIHGGNYPGALRPVTLVAYERVATGSVVTVAGVSNFELIPNPELAKNLVTEYGRFDPGAMNYTKLILSERDRLGIKTVWPTREYTDFREYFMEVADLNSPLKIAGAFGFKDIIRAIRRIAVPVVSTLFPPAAPVAHAIGEGVDYLRGDEAQAASGTARAASGKARAASGRIRQLTLAADKGYEVVANLFQVPQNPVVDGILASPGILRGAHNLDCVLREGATLFPVVITTVEDAMTPKALNNKMFAVIEGVREDLQPPSQRGSFIRTLSGHRVYGYAPDGVLPLETGRDYTVVPIDDVWDDSIMLSKDPIPPIVGNSGNLAIAYMDVFRPKVPIHVAMTGALNACGEIEKISFRSTKLATAHRLGLKLAGPGAFDVNTGPNWATFIKRFPHNPRDWDRLPYLNLPYLPPNAGRQYHLAMAASEFKETPELESAVRAMEAAANVDPLFQSALSVFMWLEENGIVTDMANFALSDPNAHRMRNFLANALQAGSKSQRAKYGTAGYGVEARGPTLEGAQREKDTRISKKMETMGIYFATQEWVAFNRHRRPSPGQLKYWQNTREIPDPNEYYLDYVHAEKSRLASEEQILRAATSIYGAPVQAEPLQAFIDEVAKVYEINHGRGPNQEQMKDLLLTAMEMKHRNPRRAPPKPKPKPNAPTQRPPGRLGRWIRTVSDEDLE.

Asp30 contacts a divalent metal cation. Positions 513 to 755 (ADKGYEVVAN…AGRQYHLAMA (243 aa)) constitute a Peptidase S50 domain. The Nucleophile role is filled by Ser652. Lys692 is a catalytic residue. A disordered region spans residues 970-1012 (MEMKHRNPRRAPPKPKPKPNAPTQRPPGRLGRWIRTVSDEDLE). Basic residues predominate over residues 975–986 (RNPRRAPPKPKP). An interaction with VP1 protein region spans residues 1003–1012 (IRTVSDEDLE).

As to quaternary structure, homotrimer. A central divalent metal stabilizes the VP2 trimer. Interacts with host ITGA4/ITGB1. In terms of assembly, homodimer. Interacts (via C-terminus) with VP1 in the cytoplasm. Interacts with VP2. In terms of processing, specific enzymatic cleavages yield mature proteins. The capsid assembly seems to be regulated by polyprotein processing. The protease VP4 cleaves itself off the polyprotein, thus releasing pre-VP2 and VP3 within the infected cell. During capsid assembly, the C-terminus of pre-VP2 is further processed by VP4, giving rise to VP2, the external capsid protein and three small peptides that all stay closely associated with the capsid.

It localises to the virion. Its subcellular location is the host cytoplasm. In terms of biological role, capsid protein VP2 self assembles to form an icosahedral capsid with a T=13 symmetry, about 70 nm in diameter, and consisting of 260 VP2 trimers. The capsid encapsulates the genomic dsRNA. VP2 is also involved in attachment and entry into the host cell by interacting with host ITGA4/ITGB1. Functionally, the precursor of VP2 plays an important role in capsid assembly. First, pre-VP2 and VP2 oligomers assemble to form a procapsid. Then, the pre-VP2 intermediates may be processed into VP2 proteins by proteolytic cleavage mediated by VP4 to obtain the mature virion. The final capsid is composed of pentamers and hexamers but VP2 has a natural tendency to assemble into all-pentameric structures. Therefore pre-VP2 may be required to allow formation of the hexameric structures. Its function is as follows. Protease VP4 is a serine protease that cleaves the polyprotein into its final products. Pre-VP2 is first partially cleaved, and may be completely processed by VP4 upon capsid maturation. Capsid protein VP3 plays a key role in virion assembly by providing a scaffold for the capsid made of VP2. May self-assemble to form a T=4-like icosahedral inner-capsid composed of at least 180 trimers. Plays a role in genomic RNA packaging by recruiting VP1 into the capsid and interacting with the dsRNA genome segments to form a ribonucleoprotein complex. Additionally, the interaction of the VP3 C-terminal tail with VP1 removes the inherent structural blockade of the polymerase active site. Thus, VP3 can also function as a transcriptional activator. In terms of biological role, structural peptide 1 is a small peptide derived from pre-VP2 C-terminus. It destabilizes and perforates cell membranes, suggesting a role during entry. Functionally, structural peptide 2 is a small peptide derived from pVP2 C-terminus. It is not essential for the virus viability, but viral growth is affected when missing. Its function is as follows. Structural peptide 3 is a small peptide derived from pVP2 C-terminus. It is not essential for the virus viability, but viral growth is affected when missing. Structural peptide 4 is a small peptide derived from pVP2 C-terminus. It is essential for the virus viability. The sequence is that of Structural polyprotein from Avian infectious bursal disease virus (strain E) (IBDV).